The sequence spans 283 residues: 4-hydroxy-3-methylbut-2-enyl diphosphate reductase (283 aa).

Cys-12 is a [4Fe-4S] cluster binding site. Positions 40 and 73 each coordinate (2E)-4-hydroxy-3-methylbut-2-enyl diphosphate. Dimethylallyl diphosphate is bound by residues His-40 and His-73. Isopentenyl diphosphate contacts are provided by His-40 and His-73. Position 95 (Cys-95) interacts with [4Fe-4S] cluster. Residue His-123 participates in (2E)-4-hydroxy-3-methylbut-2-enyl diphosphate binding. Residue His-123 coordinates dimethylallyl diphosphate. His-123 is an isopentenyl diphosphate binding site. Glu-125 (proton donor) is an active-site residue. Residue Thr-161 participates in (2E)-4-hydroxy-3-methylbut-2-enyl diphosphate binding. Residue Cys-189 participates in [4Fe-4S] cluster binding. Positions 217, 219, and 261 each coordinate (2E)-4-hydroxy-3-methylbut-2-enyl diphosphate. Dimethylallyl diphosphate contacts are provided by Ser-217, Asn-219, and Ser-261. Ser-217, Asn-219, and Ser-261 together coordinate isopentenyl diphosphate.

The protein belongs to the IspH family. [4Fe-4S] cluster is required as a cofactor.

The catalysed reaction is isopentenyl diphosphate + 2 oxidized [2Fe-2S]-[ferredoxin] + H2O = (2E)-4-hydroxy-3-methylbut-2-enyl diphosphate + 2 reduced [2Fe-2S]-[ferredoxin] + 2 H(+). It catalyses the reaction dimethylallyl diphosphate + 2 oxidized [2Fe-2S]-[ferredoxin] + H2O = (2E)-4-hydroxy-3-methylbut-2-enyl diphosphate + 2 reduced [2Fe-2S]-[ferredoxin] + 2 H(+). It participates in isoprenoid biosynthesis; dimethylallyl diphosphate biosynthesis; dimethylallyl diphosphate from (2E)-4-hydroxy-3-methylbutenyl diphosphate: step 1/1. It functions in the pathway isoprenoid biosynthesis; isopentenyl diphosphate biosynthesis via DXP pathway; isopentenyl diphosphate from 1-deoxy-D-xylulose 5-phosphate: step 6/6. Functionally, catalyzes the conversion of 1-hydroxy-2-methyl-2-(E)-butenyl 4-diphosphate (HMBPP) into a mixture of isopentenyl diphosphate (IPP) and dimethylallyl diphosphate (DMAPP). Acts in the terminal step of the DOXP/MEP pathway for isoprenoid precursor biosynthesis. This is 4-hydroxy-3-methylbut-2-enyl diphosphate reductase from Geobacter sp. (strain M21).